The following is a 135-amino-acid chain: Large ribosomal subunit protein eL32 (135 aa).

Residues 51–77 form a disordered region; the sequence is GRDNKFRLKMKGKPRPPEPGYRSPRKV.

This sequence belongs to the eukaryotic ribosomal protein eL32 family.

This is Large ribosomal subunit protein eL32 (rpl32e) from Nanoarchaeum equitans (strain Kin4-M).